Reading from the N-terminus, the 314-residue chain is 4-diphosphocytidyl-2-C-methyl-D-erythritol kinase (314 aa).

Lys11 is an active-site residue. 99 to 109 (PMAAGLAGGST) contacts ATP. Residue Asp141 is part of the active site.

The protein belongs to the GHMP kinase family. IspE subfamily.

It catalyses the reaction 4-CDP-2-C-methyl-D-erythritol + ATP = 4-CDP-2-C-methyl-D-erythritol 2-phosphate + ADP + H(+). It participates in isoprenoid biosynthesis; isopentenyl diphosphate biosynthesis via DXP pathway; isopentenyl diphosphate from 1-deoxy-D-xylulose 5-phosphate: step 3/6. In terms of biological role, catalyzes the phosphorylation of the position 2 hydroxy group of 4-diphosphocytidyl-2C-methyl-D-erythritol. In Trichodesmium erythraeum (strain IMS101), this protein is 4-diphosphocytidyl-2-C-methyl-D-erythritol kinase.